Here is a 132-residue protein sequence, read N- to C-terminus: Small ribosomal subunit protein uS8 (132 aa).

The protein belongs to the universal ribosomal protein uS8 family. As to quaternary structure, part of the 30S ribosomal subunit. Contacts proteins S5 and S12.

In terms of biological role, one of the primary rRNA binding proteins, it binds directly to 16S rRNA central domain where it helps coordinate assembly of the platform of the 30S subunit. The polypeptide is Small ribosomal subunit protein uS8 (Nitrobacter winogradskyi (strain ATCC 25391 / DSM 10237 / CIP 104748 / NCIMB 11846 / Nb-255)).